The primary structure comprises 69 residues: Conotoxin Eb6.21 (69 aa).

The first 17 residues, 1–17 (VLIIAVLFLTACQLTTA), serve as a signal peptide directing secretion. The propeptide occupies 18-41 (ETYSRGRQKHRARRSTDKNSKWTR). Cystine bridges form between Cys43–Cys57, Cys50–Cys61, and Cys56–Cys68.

This sequence belongs to the conotoxin O1 superfamily. Expressed by the venom duct.

The protein resides in the secreted. This chain is Conotoxin Eb6.21 (E1), found in Conus ebraeus (Hebrew cone).